We begin with the raw amino-acid sequence, 203 residues long: Translation machinery-associated protein 16 (203 aa).

Residues 1 to 40 (MPKAPKGKSVGQEKKVIHPYSRKAAQITRKAHKQEKKEEL) form a disordered region. Ser-9 carries the ADP-ribosylserine modification.

Belongs to the TMA16 family. Associates with pre-60S ribosomal particles.

It localises to the nucleus. Its function is as follows. Involved in the biogenesis of the 60S ribosomal subunit in the nucleus. The chain is Translation machinery-associated protein 16 (TMA16) from Bos taurus (Bovine).